A 408-amino-acid chain; its full sequence is DNA polymerase processivity factor (408 aa).

Positions 344–353 (KKRRNLLTKR) match the Nuclear localization signal motif.

This sequence belongs to the herpesviridae DNA polymerase processivity factor family. In terms of assembly, interacts with the DNA polymerase catalytic subunit. Interacts with the origin-binding protein.

Its subcellular location is the host nucleus. Its function is as follows. Plays an essential role in viral DNA replication by acting as the polymerase accessory subunit. Associates with the viral polymerase to increase its processivity and forms high-affinity direct interactions with DNA. Facilitates the origin-binding protein loading onto DNA thus increasing its ability to assemble into a functional complex capable of unwinding duplex DNA. The protein is DNA polymerase processivity factor of Varicella-zoster virus (strain Dumas) (HHV-3).